Reading from the N-terminus, the 173-residue chain is Myosin light chain 5 (173 aa).

Positions 1-22 (MASRKTKKKEGGGLRAQRASSN) are disordered. EF-hand domains lie at 30-65 (TQIQ…LGKT), 100-135 (DAEE…QADK), and 136-171 (MTAE…GEEK). Ca(2+) is bound by residues Asp43, Asn45, Asp47, and Asp54.

As to quaternary structure, myosin is a hexamer of 2 heavy chains and 4 light chains. In terms of tissue distribution, jaw-closing muscles.

The polypeptide is Myosin light chain 5 (MYL5) (Felis catus (Cat)).